The chain runs to 584 residues: Sperm-associated microtubule inner protein 4 (584 aa).

Its subcellular location is the cytoplasm. It localises to the cytoskeleton. It is found in the microtubule organizing center. The protein resides in the centrosome. The protein localises to the flagellum axoneme. In terms of biological role, microtubule inner protein (MIP) part of the dynein-decorated doublet microtubules (DMTs) in flagellum axoneme. May serve to reinforce and thus stabilize the microtubule structure in the sperm flagella. This chain is Sperm-associated microtubule inner protein 4 (SPMIP4), found in Bos taurus (Bovine).